The primary structure comprises 369 residues: RNA-binding protein rnp24 (369 aa).

Disordered regions lie at residues 1-77 (MEPI…KKKE), 200-219 (TDFS…TASI), and 304-369 (RMRN…IKFD). The 102-residue stretch at 105 to 206 (WGIWVGNLSF…KSNTDFSGRP (102 aa)) folds into the RRM 1 domain. Polar residues predominate over residues 209–219 (PANTLSKTASI). The RRM 2 domain maps to 228-310 (SILFVGNLDF…RSKRMRNKSP (83 aa)). A compositionally biased stretch (basic and acidic residues) spans 325-341 (QEDKPNFKRARKIDPRS). Residues 346-357 (AALAKAQRSSAA) show a composition bias toward low complexity.

The protein localises to the nucleus. This chain is RNA-binding protein rnp24 (rnp24), found in Schizosaccharomyces pombe (strain 972 / ATCC 24843) (Fission yeast).